The sequence spans 156 residues: dCTP deaminase (156 aa).

Residues Arg79–Arg84, Asp95, Gln124, and Tyr138 each bind dCTP.

The protein belongs to the dCTP deaminase family. As to quaternary structure, homotrimer.

It carries out the reaction dCTP + H2O + H(+) = dUTP + NH4(+). The protein operates within pyrimidine metabolism; dUMP biosynthesis; dUMP from dCTP (dUTP route): step 1/2. Functionally, catalyzes the deamination of dCTP to dUTP. The chain is dCTP deaminase from Pyrococcus horikoshii (strain ATCC 700860 / DSM 12428 / JCM 9974 / NBRC 100139 / OT-3).